The sequence spans 168 residues: Phosphopantetheine adenylyltransferase (168 aa).

Threonine 14 is a binding site for substrate. ATP-binding positions include threonine 14–phenylalanine 15 and histidine 22. Substrate-binding residues include lysine 46, leucine 78, and arginine 92. ATP-binding positions include glycine 93–arginine 95, glutamate 103, and tyrosine 128–serine 134.

It belongs to the bacterial CoaD family. Homohexamer. Mg(2+) is required as a cofactor.

The protein resides in the cytoplasm. The enzyme catalyses (R)-4'-phosphopantetheine + ATP + H(+) = 3'-dephospho-CoA + diphosphate. It participates in cofactor biosynthesis; coenzyme A biosynthesis; CoA from (R)-pantothenate: step 4/5. Its function is as follows. Reversibly transfers an adenylyl group from ATP to 4'-phosphopantetheine, yielding dephospho-CoA (dPCoA) and pyrophosphate. The chain is Phosphopantetheine adenylyltransferase from Xanthomonas euvesicatoria pv. vesicatoria (strain 85-10) (Xanthomonas campestris pv. vesicatoria).